The sequence spans 259 residues: UPF0246 protein Pfl01_0961 (259 aa).

Belongs to the UPF0246 family.

The protein is UPF0246 protein Pfl01_0961 of Pseudomonas fluorescens (strain Pf0-1).